The sequence spans 359 residues: Pyruvate dehydrogenase E1 component subunit beta, mitochondrial (359 aa).

A mitochondrion-targeting transit peptide spans 1 to 30 (MAAVAGLVRGPLRQASGLLKRRFHRSAPAA). At Tyr67 the chain carries Phosphotyrosine. Glu89 serves as a coordination point for thiamine diphosphate. Positions 142, 190, 191, 193, and 195 each coordinate K(+). At Lys354 the chain carries N6-acetyllysine.

Heterotetramer of two PDHA1 and two PDHB subunits. The heterotetramer interacts with DLAT, and is part of the multimeric pyruvate dehydrogenase complex that contains multiple copies of pyruvate dehydrogenase (E1), dihydrolipoamide acetyltransferase (DLAT, E2) and lipoamide dehydrogenase (DLD, E3). These subunits are bound to an inner core composed of about 48 DLAT and 12 PDHX molecules. Interacts with DLAT. Thiamine diphosphate serves as cofactor.

It is found in the mitochondrion matrix. The catalysed reaction is N(6)-[(R)-lipoyl]-L-lysyl-[protein] + pyruvate + H(+) = N(6)-[(R)-S(8)-acetyldihydrolipoyl]-L-lysyl-[protein] + CO2. In terms of biological role, the pyruvate dehydrogenase complex catalyzes the overall conversion of pyruvate to acetyl-CoA and CO(2), and thereby links the glycolytic pathway to the tricarboxylic cycle. The sequence is that of Pyruvate dehydrogenase E1 component subunit beta, mitochondrial (Pdhb) from Rattus norvegicus (Rat).